We begin with the raw amino-acid sequence, 438 residues long: RNA polymerase sigma factor SigA (438 aa).

The span at 1–11 (MKKSKSKKKAA) shows a compositional bias: basic residues. The interval 1-69 (MKKSKSKKKA…PLDLEGPLEA (69 aa)) is disordered. Positions 12-26 (KAQEVEVKEPVKEPE) are enriched in basic and acidic residues. Composition is skewed to acidic residues over residues 27-45 (PLPE…EPDP) and 52-69 (PELE…PLEA). The tract at residues 93 to 128 (SDPVRQYLHEIGQVPLLTLEEEIDLARKVEEGMEAI) is sigma-70 factor domain-1. The tract at residues 202–272 (LIEANLRLVV…NRAIADQART (71 aa)) is sigma-70 factor domain-2. Positions 226-229 (DLIQ) match the Interaction with polymerase core subunit RpoC motif. The tract at residues 281-359 (ETINKLSRTA…DENLPSPVEA (79 aa)) is sigma-70 factor domain-3. Positions 372–424 (ALSKLSEREAMVLKLRKGLIDGREHTLEEVGAYFGVTRERIRQIENKALRKLK) are sigma-70 factor domain-4. The H-T-H motif DNA-binding region spans 398–417 (LEEVGAYFGVTRERIRQIEN).

Belongs to the sigma-70 factor family. RpoD/SigA subfamily. In terms of assembly, interacts transiently with the RNA polymerase catalytic core formed by RpoA, RpoB, RpoC and RpoZ (2 alpha, 1 beta, 1 beta' and 1 omega subunit) to form the RNA polymerase holoenzyme that can initiate transcription.

It is found in the cytoplasm. Its function is as follows. Sigma factors are initiation factors that promote the attachment of RNA polymerase to specific initiation sites and are then released. This sigma factor is the primary sigma factor during exponential growth. This Thermus aquaticus protein is RNA polymerase sigma factor SigA.